The chain runs to 453 residues: uncharacterized protein (453 aa).

[4Fe-4S] cluster is bound by residues cysteine 74, cysteine 80, cysteine 83, and cysteine 162. 4 residues coordinate S-adenosyl-L-methionine: glutamine 286, tyrosine 315, glutamate 336, and aspartate 384. The active-site Nucleophile is the cysteine 411.

This sequence belongs to the class I-like SAM-binding methyltransferase superfamily. RNA M5U methyltransferase family.

This is an uncharacterized protein from Staphylococcus aureus (strain MW2).